A 107-amino-acid chain; its full sequence is Phosphoribosyl-ATP pyrophosphatase (107 aa).

Belongs to the PRA-PH family.

Its subcellular location is the cytoplasm. It catalyses the reaction 1-(5-phospho-beta-D-ribosyl)-ATP + H2O = 1-(5-phospho-beta-D-ribosyl)-5'-AMP + diphosphate + H(+). It functions in the pathway amino-acid biosynthesis; L-histidine biosynthesis; L-histidine from 5-phospho-alpha-D-ribose 1-diphosphate: step 2/9. This chain is Phosphoribosyl-ATP pyrophosphatase (hisE), found in Clostridium tetani (strain Massachusetts / E88).